The primary structure comprises 447 residues: GTPase Der (447 aa).

EngA-type G domains are found at residues 3–167 and 180–353; these read PVIA…HLAD and IRLA…ASAN. GTP-binding positions include 9-16, 56-60, 119-122, 186-193, 233-237, and 298-301; these read GRPNVGKS, DTGGF, NKAE, DTAGL, and NKWD. The KH-like domain maps to 354 to 438; it reads RKMSTPVLTR…PMRIQMKSSH (85 aa).

This sequence belongs to the TRAFAC class TrmE-Era-EngA-EngB-Septin-like GTPase superfamily. EngA (Der) GTPase family. As to quaternary structure, associates with the 50S ribosomal subunit.

Its function is as follows. GTPase that plays an essential role in the late steps of ribosome biogenesis. This Polaromonas sp. (strain JS666 / ATCC BAA-500) protein is GTPase Der.